The sequence spans 902 residues: Serine/threonine-protein kinase cbk1 (902 aa).

Disordered regions lie at residues 1–22 (MSED…TCLK), 97–154 (ETHS…REDA), and 207–288 (QRMM…MVSP). Basic and acidic residues predominate over residues 97–118 (ETHSHSSDAEGTSHQDVSDRRN). Residues 125 to 134 (RPSSHSQADS) are compositionally biased toward polar residues. Composition is skewed to basic and acidic residues over residues 142 to 154 (QQKE…REDA) and 210 to 221 (MLDRGNPKRERS). Residues 222–239 (SGSSTPSSKSSPVDSVST) are compositionally biased toward low complexity. The segment covering 240–259 (APTSVSPGSLAPSGSTNNDP) has biased composition (polar residues). Over residues 264-274 (KHIDSQADLPE) the composition is skewed to basic and acidic residues. The region spanning 378–732 (FEPLKILGRG…SPKYKQNDAI (355 aa)) is the Protein kinase domain. Residues 384-392 (LGRGSFGVV) and K432 contribute to the ATP site. D527 acts as the Proton acceptor in catalysis. Positions 771–831 (RGINWEQIHR…KWHPLGGKGG (61 aa)) constitute an AGC-kinase C-terminal domain. Over residues 797–806 (YFDDGEHPSD) the composition is skewed to basic and acidic residues. The tract at residues 797–875 (YFDDGEHPSD…KKRLKEAKRA (79 aa)) is disordered. The segment covering 807–818 (REDDSSDSELDG) has biased composition (acidic residues). Over residues 833–843 (HKPDKPLKADV) the composition is skewed to basic and acidic residues.

It belongs to the protein kinase superfamily. STE Ser/Thr protein kinase family. COT1 subfamily.

It carries out the reaction L-seryl-[protein] + ATP = O-phospho-L-seryl-[protein] + ADP + H(+). The enzyme catalyses L-threonyl-[protein] + ATP = O-phospho-L-threonyl-[protein] + ADP + H(+). In terms of biological role, protein kinase that seems to play a role in the regulation of cell morphogenesis and proliferation. The sequence is that of Serine/threonine-protein kinase cbk1 (cbk1) from Emericella nidulans (strain FGSC A4 / ATCC 38163 / CBS 112.46 / NRRL 194 / M139) (Aspergillus nidulans).